The following is a 94-amino-acid chain: Co-chaperonin GroES (94 aa).

This sequence belongs to the GroES chaperonin family. Heptamer of 7 subunits arranged in a ring. Interacts with the chaperonin GroEL.

It localises to the cytoplasm. In terms of biological role, together with the chaperonin GroEL, plays an essential role in assisting protein folding. The GroEL-GroES system forms a nano-cage that allows encapsulation of the non-native substrate proteins and provides a physical environment optimized to promote and accelerate protein folding. GroES binds to the apical surface of the GroEL ring, thereby capping the opening of the GroEL channel. In Acetivibrio thermocellus (strain ATCC 27405 / DSM 1237 / JCM 9322 / NBRC 103400 / NCIMB 10682 / NRRL B-4536 / VPI 7372) (Clostridium thermocellum), this protein is Co-chaperonin GroES.